We begin with the raw amino-acid sequence, 304 residues long: Ribosomal RNA small subunit methyltransferase H (304 aa).

Residues 47–49 (GGH), aspartate 66, phenylalanine 93, aspartate 108, and glutamine 115 each bind S-adenosyl-L-methionine.

It belongs to the methyltransferase superfamily. RsmH family.

Its subcellular location is the cytoplasm. It catalyses the reaction cytidine(1402) in 16S rRNA + S-adenosyl-L-methionine = N(4)-methylcytidine(1402) in 16S rRNA + S-adenosyl-L-homocysteine + H(+). Its function is as follows. Specifically methylates the N4 position of cytidine in position 1402 (C1402) of 16S rRNA. In Prochlorococcus marinus (strain NATL2A), this protein is Ribosomal RNA small subunit methyltransferase H.